The primary structure comprises 436 residues: 3-ketoacyl-CoA thiolase (436 aa).

The Acyl-thioester intermediate role is filled by cysteine 99. Residues histidine 392 and cysteine 422 each act as proton acceptor in the active site.

This sequence belongs to the thiolase-like superfamily. Thiolase family. Heterotetramer of two alpha chains (FadJ) and two beta chains (FadI).

It localises to the cytoplasm. It catalyses the reaction an acyl-CoA + acetyl-CoA = a 3-oxoacyl-CoA + CoA. Its pathway is lipid metabolism; fatty acid beta-oxidation. Catalyzes the final step of fatty acid oxidation in which acetyl-CoA is released and the CoA ester of a fatty acid two carbons shorter is formed. This is 3-ketoacyl-CoA thiolase from Shigella flexneri.